A 419-amino-acid polypeptide reads, in one-letter code: Tyrosine--tRNA ligase 2 (419 aa).

Position 34 (Tyr-34) interacts with L-tyrosine. A 'HIGH' region motif is present at residues 39–48; sequence PTGDSMHIGH. L-tyrosine is bound by residues Tyr-168 and Gln-172. A 'KMSKS' region motif is present at residues 230–234; it reads KFGKS. An ATP-binding site is contributed by Lys-233. One can recognise an S4 RNA-binding domain in the interval 352–418; that stretch reads KNIVEWLVDL…GKKNYSLVKL (67 aa).

The protein belongs to the class-I aminoacyl-tRNA synthetase family. TyrS type 1 subfamily. In terms of assembly, homodimer.

The protein resides in the cytoplasm. It catalyses the reaction tRNA(Tyr) + L-tyrosine + ATP = L-tyrosyl-tRNA(Tyr) + AMP + diphosphate + H(+). In terms of biological role, catalyzes the attachment of tyrosine to tRNA(Tyr) in a two-step reaction: tyrosine is first activated by ATP to form Tyr-AMP and then transferred to the acceptor end of tRNA(Tyr). The polypeptide is Tyrosine--tRNA ligase 2 (Bacillus anthracis).